Reading from the N-terminus, the 394-residue chain is Lipase 3 (394 aa).

An N-terminal signal peptide occupies residues 1 to 20 (MTRGALKVTILLVGLGLVLA). Asn131 is a glycosylation site (N-linked (GlcNAc...) asparagine). Active-site charge relay system residues include Ser164 and His369.

The protein belongs to the AB hydrolase superfamily. Lipase family. As to expression, fat body.

This is Lipase 3 (Lip3) from Drosophila melanogaster (Fruit fly).